A 257-amino-acid chain; its full sequence is UPF0246 protein Mpe_A2092 (257 aa).

The protein belongs to the UPF0246 family.

This chain is UPF0246 protein Mpe_A2092, found in Methylibium petroleiphilum (strain ATCC BAA-1232 / LMG 22953 / PM1).